The following is a 98-amino-acid chain: NADH-ubiquinone oxidoreductase chain 4L (98 aa).

The next 3 helical transmembrane spans lie at 2 to 22, 29 to 49, and 61 to 81; these read PSISTNITLAFITALLGMLIF, SLLCLEGMMLSMFILSTLTIL, and ILLLVFAACEAAVGLALLVTV.

Belongs to the complex I subunit 4L family. Core subunit of respiratory chain NADH dehydrogenase (Complex I) which is composed of 45 different subunits.

Its subcellular location is the mitochondrion inner membrane. It catalyses the reaction a ubiquinone + NADH + 5 H(+)(in) = a ubiquinol + NAD(+) + 4 H(+)(out). Its function is as follows. Core subunit of the mitochondrial membrane respiratory chain NADH dehydrogenase (Complex I) which catalyzes electron transfer from NADH through the respiratory chain, using ubiquinone as an electron acceptor. Part of the enzyme membrane arm which is embedded in the lipid bilayer and involved in proton translocation. The protein is NADH-ubiquinone oxidoreductase chain 4L (MT-ND4L) of Hapalemur aureus (Golden bamboo lemur).